We begin with the raw amino-acid sequence, 563 residues long: Putative cysteine ligase BshC (563 aa).

A coiled-coil region spans residues 493–518; sequence KEKTYRAGRRKHDELLQQLDKAELNL.

It belongs to the BshC family.

The chain is Putative cysteine ligase BshC from Chlorobaculum tepidum (strain ATCC 49652 / DSM 12025 / NBRC 103806 / TLS) (Chlorobium tepidum).